The following is a 206-amino-acid chain: Large ribosomal subunit protein eL13 (206 aa).

Over residues 184-193 (EKTNQKWDGK) the composition is skewed to basic and acidic residues. The segment at 184-206 (EKTNQKWDGKRKAKAQAAAEPKA) is disordered.

It belongs to the eukaryotic ribosomal protein eL13 family.

In Tetrahymena thermophila (strain SB210), this protein is Large ribosomal subunit protein eL13 (RPL13).